The sequence spans 230 residues: Lipoprotein-releasing system ATP-binding protein LolD (230 aa).

The 225-residue stretch at 6–230 folds into the ABC transporter domain; that stretch reads LQVQAVSKSY…GYLQVPESAQ (225 aa). 42-49 contributes to the ATP binding site; the sequence is GTSGSGKS.

It belongs to the ABC transporter superfamily. Lipoprotein translocase (TC 3.A.1.125) family. As to quaternary structure, the complex is composed of two ATP-binding proteins (LolD) and two transmembrane proteins (LolC and LolE).

Its subcellular location is the cell inner membrane. In terms of biological role, part of the ABC transporter complex LolCDE involved in the translocation of mature outer membrane-directed lipoproteins, from the inner membrane to the periplasmic chaperone, LolA. Responsible for the formation of the LolA-lipoprotein complex in an ATP-dependent manner. The sequence is that of Lipoprotein-releasing system ATP-binding protein LolD from Shewanella oneidensis (strain ATCC 700550 / JCM 31522 / CIP 106686 / LMG 19005 / NCIMB 14063 / MR-1).